We begin with the raw amino-acid sequence, 106 residues long: L-rhamnose mutarotase (106 aa).

Tyrosine 20 lines the substrate pocket. Histidine 24 serves as the catalytic Proton donor. Substrate is bound by residues tyrosine 43 and 78-79 (WW).

It belongs to the rhamnose mutarotase family. As to quaternary structure, homodimer.

The protein resides in the cytoplasm. The catalysed reaction is alpha-L-rhamnose = beta-L-rhamnose. The protein operates within carbohydrate metabolism; L-rhamnose metabolism. Its function is as follows. Involved in the anomeric conversion of L-rhamnose. In Verminephrobacter eiseniae (strain EF01-2), this protein is L-rhamnose mutarotase.